A 106-amino-acid polypeptide reads, in one-letter code: Iron-sulfur cluster assembly protein CyaY (106 aa).

It belongs to the frataxin family.

Functionally, involved in iron-sulfur (Fe-S) cluster assembly. May act as a regulator of Fe-S biogenesis. The chain is Iron-sulfur cluster assembly protein CyaY from Salmonella agona (strain SL483).